Here is a 207-residue protein sequence, read N- to C-terminus: Transcriptional regulatory protein RcsA (207 aa).

The HTH luxR-type domain occupies 131-196 (LTLPTLSLSK…VIYHIVRLTE (66 aa)). Residues 155–174 (TSQISTQMNIKAKTVSSHKG) constitute a DNA-binding region (H-T-H motif).

This sequence belongs to the RcsA family.

Functionally, component of the Rcs signaling system, which controls transcription of numerous genes. Binds to DNA to regulate expression of genes. The sequence is that of Transcriptional regulatory protein RcsA from Klebsiella aerogenes (Enterobacter aerogenes).